Reading from the N-terminus, the 964-residue chain is Phosphoenolpyruvate carboxylase (964 aa).

S11 carries the phosphoserine modification. Residues H172 and K600 contribute to the active site.

Belongs to the PEPCase type 1 family. Homotetramer. It depends on Mg(2+) as a cofactor.

Its subcellular location is the cytoplasm. The catalysed reaction is oxaloacetate + phosphate = phosphoenolpyruvate + hydrogencarbonate. The protein operates within photosynthesis; C4 acid pathway. By light-reversible phosphorylation. Its function is as follows. Through the carboxylation of phosphoenolpyruvate (PEP) it forms oxaloacetate, a four-carbon dicarboxylic acid source for the tricarboxylic acid cycle. The chain is Phosphoenolpyruvate carboxylase (PPC) from Nicotiana tabacum (Common tobacco).